The following is a 419-amino-acid chain: Arginine biosynthesis bifunctional protein ArgJ 1, mitochondrial (419 aa).

Lysine 177, threonine 188, glutamate 275, asparagine 414, and threonine 419 together coordinate substrate. Threonine 188 acts as the Nucleophile in catalysis.

The protein belongs to the ArgJ family. In terms of assembly, heterodimer of an alpha and a beta chain. The alpha and beta chains are autoproteolytically processed from a single precursor protein within the mitochondrion.

The protein localises to the mitochondrion matrix. It carries out the reaction N(2)-acetyl-L-ornithine + L-glutamate = N-acetyl-L-glutamate + L-ornithine. The catalysed reaction is L-glutamate + acetyl-CoA = N-acetyl-L-glutamate + CoA + H(+). Its pathway is amino-acid biosynthesis; L-arginine biosynthesis; L-ornithine and N-acetyl-L-glutamate from L-glutamate and N(2)-acetyl-L-ornithine (cyclic): step 1/1. The protein operates within amino-acid biosynthesis; L-arginine biosynthesis; N(2)-acetyl-L-ornithine from L-glutamate: step 1/4. Its function is as follows. Catalyzes two activities which are involved in the cyclic version of arginine biosynthesis: the synthesis of acetylglutamate from glutamate and acetyl-CoA, and of ornithine by transacetylation between acetylornithine and glutamate. The sequence is that of Arginine biosynthesis bifunctional protein ArgJ 1, mitochondrial from Sclerotinia sclerotiorum (strain ATCC 18683 / 1980 / Ss-1) (White mold).